The primary structure comprises 881 residues: Valine--tRNA ligase (881 aa).

Residues Pro49–His59 carry the 'HIGH' region motif. Positions Lys526–Ser530 match the 'KMSKS' region motif. Residue Lys529 coordinates ATP. Positions Leu810–Lys881 form a coiled coil.

It belongs to the class-I aminoacyl-tRNA synthetase family. ValS type 1 subfamily. Monomer.

The protein resides in the cytoplasm. The enzyme catalyses tRNA(Val) + L-valine + ATP = L-valyl-tRNA(Val) + AMP + diphosphate. Catalyzes the attachment of valine to tRNA(Val). As ValRS can inadvertently accommodate and process structurally similar amino acids such as threonine, to avoid such errors, it has a 'posttransfer' editing activity that hydrolyzes mischarged Thr-tRNA(Val) in a tRNA-dependent manner. The chain is Valine--tRNA ligase from Bacillus cereus (strain ATCC 10987 / NRS 248).